A 915-amino-acid polypeptide reads, in one-letter code: Hexokinase HKDC1 (915 aa).

The tract at residues 1-20 is mitochondrial-binding peptide (MBP); that stretch reads MFAVHLVAFYFTKLKEDQIK. 2 Hexokinase domains span residues 16-458 and 464-903; these read EDQI…MVTA and QAQR…LITA. ATP-binding positions include arginine 30 and 84-89; that span reads DLGGSK. The segment at 73–207 is hexokinase small subdomain 1; sequence DGSENGEFLS…DLDVDILALV (135 aa). Position 84–91 (84–91) interacts with D-glucose 6-phosphate; it reads DLGGSKFR. D-glucose is bound by residues serine 155, 172-173, and 208-209; these read TK and ND. The interval 208–447 is hexokinase large subdomain 1; it reads NDTVGTMMTC…CDVRFLLSES (240 aa). Residues aspartate 209 and threonine 232 each coordinate D-glucose 6-phosphate. D-glucose-binding positions include asparagine 235, glutamate 260, and 291–294; that span reads QLFE. Residue 413–415 participates in D-glucose 6-phosphate binding; sequence DGT. 425–426 is a binding site for ATP; sequence KR. D-glucose 6-phosphate is bound by residues serine 449 and 532 to 536; that span reads DLGGT. The interval 521 to 652 is hexokinase small subdomain 2; it reads DGTEKGKFLA…EFDLDIVAIV (132 aa). ATP is bound at residue 532-537; the sequence is DLGGTN. D-glucose contacts are provided by residues 600–601, 617–618, and 653–654; these read SF, TK, and ND. The tract at residues 653–892 is hexokinase large subdomain 2; it reads NDTVGTMMTC…CDVTFMLSED (240 aa). Residues aspartate 654 and threonine 677 each coordinate D-glucose 6-phosphate. Position 677 (threonine 677) interacts with ATP. D-glucose-binding positions include 679-680, glutamate 705, and glutamate 739; that span reads SN. Residues 744-745, 781-785, and 860-864 each bind ATP; these read GM, TKFLS, and TLYKL. D-glucose 6-phosphate contacts are provided by residues 858–860 and serine 894; that span reads DGT.

It belongs to the hexokinase family. In terms of tissue distribution, widely expressed. Detected in retina, brain, cerebellum, liver, lung, kidney, spleen, pancreas and intestine.

It is found in the cytoplasm. The protein resides in the mitochondrion membrane. It localises to the photoreceptor inner segment. It carries out the reaction a D-hexose + ATP = a D-hexose 6-phosphate + ADP + H(+). The enzyme catalyses D-glucose + ATP = D-glucose 6-phosphate + ADP + H(+). Its pathway is carbohydrate metabolism; hexose metabolism. It participates in carbohydrate degradation; glycolysis; D-glyceraldehyde 3-phosphate and glycerone phosphate from D-glucose: step 1/4. In terms of biological role, catalyzes the phosphorylation of hexose to hexose 6-phosphate, although at very low level compared to other hexokinases. Has low glucose phosphorylating activity compared to other hexokinases. Involved in glucose homeostasis and hepatic lipid accumulation. Required to maintain whole-body glucose homeostasis during pregnancy; however additional evidences are required to confirm this role. This is Hexokinase HKDC1 from Mus musculus (Mouse).